Reading from the N-terminus, the 490-residue chain is UDP-N-acetylmuramate--L-alanine ligase (490 aa).

126 to 132 serves as a coordination point for ATP; that stretch reads GTHGKTT.

Belongs to the MurCDEF family.

The protein localises to the cytoplasm. The catalysed reaction is UDP-N-acetyl-alpha-D-muramate + L-alanine + ATP = UDP-N-acetyl-alpha-D-muramoyl-L-alanine + ADP + phosphate + H(+). It functions in the pathway cell wall biogenesis; peptidoglycan biosynthesis. Its function is as follows. Cell wall formation. This is UDP-N-acetylmuramate--L-alanine ligase from Baumannia cicadellinicola subsp. Homalodisca coagulata.